The chain runs to 316 residues: Acetaldehyde dehydrogenase 1 (316 aa).

An NAD(+)-binding site is contributed by 12-15; the sequence is SGNI. Cysteine 132 functions as the Acyl-thioester intermediate in the catalytic mechanism. NAD(+) contacts are provided by residues 163 to 171 and asparagine 291; that span reads SAGPGTRAN.

It belongs to the acetaldehyde dehydrogenase family.

The enzyme catalyses acetaldehyde + NAD(+) + CoA = acetyl-CoA + NADH + H(+). This chain is Acetaldehyde dehydrogenase 1, found in Pseudomonas putida (strain ATCC 700007 / DSM 6899 / JCM 31910 / BCRC 17059 / LMG 24140 / F1).